A 720-amino-acid chain; its full sequence is Fatty acid CoA ligase Acsl3 (720 aa).

The chain crosses the membrane as a helical; Signal-anchor for type III membrane protein span at residues 21–41 (ILLYFIHFLISLYTILTYIPF). At 42–720 (YFFSESRQEK…ADIERMYGRK (679 aa)) the chain is on the cytoplasmic side. Position 683 is a phosphoserine (Ser-683).

Belongs to the ATP-dependent AMP-binding enzyme family. Requires Mg(2+) as cofactor.

Its subcellular location is the mitochondrion outer membrane. The protein resides in the peroxisome membrane. It localises to the microsome membrane. It is found in the endoplasmic reticulum membrane. The catalysed reaction is a long-chain fatty acid + ATP + CoA = a long-chain fatty acyl-CoA + AMP + diphosphate. It catalyses the reaction (5Z,8Z,11Z,14Z)-eicosatetraenoate + ATP + CoA = (5Z,8Z,11Z,14Z)-eicosatetraenoyl-CoA + AMP + diphosphate. It carries out the reaction (E)-hexadec-2-enoate + ATP + CoA = (2E)-hexadecenoyl-CoA + AMP + diphosphate. The enzyme catalyses 15-hydroxy-(5Z,8Z,11Z,13E)-eicosatetraenoate + ATP + CoA = 15-hydroxy-(5Z,8Z,11Z,13E)-eicosatetraenoyl-CoA + AMP + diphosphate. The catalysed reaction is 12-hydroxy-(5Z,8Z,10E,14Z)-eicosatetraenoate + ATP + CoA = 12-hydroxy-(5Z,8Z,10E,14Z)-eicosatetraenoyl-CoA + AMP + diphosphate. It catalyses the reaction 5-hydroxy-(6E,8Z,11Z,14Z)-eicosatetraenoate + ATP + CoA = 5-hydroxy-(6E,8Z,11Z,14Z)-eicosatetraenoyl-CoA + AMP + diphosphate. It carries out the reaction 14,15-epoxy-(5Z,8Z,11Z)-eicosatrienoate + ATP + CoA = 14,15-epoxy-(5Z,8Z,11Z)-eicosatrienoyl-CoA + AMP + diphosphate. The enzyme catalyses 11,12-epoxy-(5Z,8Z,14Z)-eicosatrienoate + ATP + CoA = 11,12-epoxy-(5Z,8Z,14Z)-eicosatrienoyl-CoA + AMP + diphosphate. The catalysed reaction is a medium-chain fatty acid + ATP + CoA = a medium-chain fatty acyl-CoA + AMP + diphosphate. It catalyses the reaction hexadecanoate + ATP + CoA = hexadecanoyl-CoA + AMP + diphosphate. It carries out the reaction tetradecanoate + ATP + CoA = tetradecanoyl-CoA + AMP + diphosphate. The enzyme catalyses dodecanoate + ATP + CoA = dodecanoyl-CoA + AMP + diphosphate. The catalysed reaction is octadecanoate + ATP + CoA = octadecanoyl-CoA + AMP + diphosphate. It catalyses the reaction eicosanoate + ATP + CoA = eicosanoyl-CoA + AMP + diphosphate. It carries out the reaction (9Z)-octadecenoate + ATP + CoA = (9Z)-octadecenoyl-CoA + AMP + diphosphate. The enzyme catalyses (9Z)-hexadecenoate + ATP + CoA = (9Z)-hexadecenoyl-CoA + AMP + diphosphate. The catalysed reaction is (9Z,12Z)-octadecadienoate + ATP + CoA = (9Z,12Z)-octadecadienoyl-CoA + AMP + diphosphate. It catalyses the reaction (9Z,12Z,15Z)-octadecatrienoate + ATP + CoA = (9Z,12Z,15Z)-octadecatrienoyl-CoA + AMP + diphosphate. It carries out the reaction (4Z,7Z,10Z,13Z,16Z,19Z)-docosahexaenoate + ATP + CoA = (4Z,7Z,10Z,13Z,16Z,19Z)-docosahexaenoyl-CoA + AMP + diphosphate. The enzyme catalyses (5Z,8Z,11Z,14Z,17Z)-eicosapentaenoate + ATP + CoA = (5Z,8Z,11Z,14Z,17Z)-eicosapentaenoyl-CoA + AMP + diphosphate. The catalysed reaction is a fatty acid + ATP + CoA = a fatty acyl-CoA + AMP + diphosphate. Its function is as follows. Acyl-CoA synthetases (ACSL) activates long-chain fatty acids for both synthesis of cellular lipids, and degradation via beta-oxidation. Required for the incorporation of fatty acids into phosphatidylcholine, the major phospholipid located on the surface of VLDL (very low density lipoproteins). Has mainly an anabolic role in energy metabolism. Mediates hepatic lipogenesis. Preferentially uses myristate, laurate, arachidonate and eicosapentaenoate as substrates. Both isoforms exhibit the same level of activity. The polypeptide is Fatty acid CoA ligase Acsl3 (Homo sapiens (Human)).